The sequence spans 295 residues: UDP-N-acetylenolpyruvoylglucosamine reductase (295 aa).

In terms of domain architecture, FAD-binding PCMH-type spans 25-189 (RVGGPADLFA…LEALFRLDQR (165 aa)). Residue Arg169 is part of the active site. Residue Ser218 is the Proton donor of the active site. Residue Glu288 is part of the active site.

It belongs to the MurB family. Requires FAD as cofactor.

It localises to the cytoplasm. It catalyses the reaction UDP-N-acetyl-alpha-D-muramate + NADP(+) = UDP-N-acetyl-3-O-(1-carboxyvinyl)-alpha-D-glucosamine + NADPH + H(+). It functions in the pathway cell wall biogenesis; peptidoglycan biosynthesis. Functionally, cell wall formation. The polypeptide is UDP-N-acetylenolpyruvoylglucosamine reductase (Pelobacter propionicus (strain DSM 2379 / NBRC 103807 / OttBd1)).